The chain runs to 102 residues: uncharacterized protein (102 aa).

A helical membrane pass occupies residues 29–52 (IGSTYFCFGGAIFILVAPLTNLVY).

It localises to the membrane. This is an uncharacterized protein from Saccharomyces cerevisiae (strain ATCC 204508 / S288c) (Baker's yeast).